The following is a 115-amino-acid chain: Yop proteins translocation protein M (115 aa).

Residues 19-39 (HGGQAGRLTETNPLTENSHQI) are disordered. The segment covering 27–39 (TETNPLTENSHQI) has biased composition (polar residues).

Its function is as follows. Belongs to an operon involved in the translocation of Yop proteins across the bacterial membranes or in the specific control of this function. This chain is Yop proteins translocation protein M (yscM), found in Yersinia enterocolitica.